A 230-amino-acid chain; its full sequence is 5'-methylthioadenosine/S-adenosylhomocysteine nucleosidase (230 aa).

The active-site Proton acceptor is the Glu12. Substrate is bound by residues Gly78, Ile153, and 174–175 (ME). The active-site Proton donor is the Asp198.

It belongs to the PNP/UDP phosphorylase family. MtnN subfamily.

It carries out the reaction S-adenosyl-L-homocysteine + H2O = S-(5-deoxy-D-ribos-5-yl)-L-homocysteine + adenine. The enzyme catalyses S-methyl-5'-thioadenosine + H2O = 5-(methylsulfanyl)-D-ribose + adenine. The catalysed reaction is 5'-deoxyadenosine + H2O = 5-deoxy-D-ribose + adenine. It participates in amino-acid biosynthesis; L-methionine biosynthesis via salvage pathway; S-methyl-5-thio-alpha-D-ribose 1-phosphate from S-methyl-5'-thioadenosine (hydrolase route): step 1/2. Catalyzes the irreversible cleavage of the glycosidic bond in both 5'-methylthioadenosine (MTA) and S-adenosylhomocysteine (SAH/AdoHcy) to adenine and the corresponding thioribose, 5'-methylthioribose and S-ribosylhomocysteine, respectively. Also cleaves 5'-deoxyadenosine, a toxic by-product of radical S-adenosylmethionine (SAM) enzymes, into 5-deoxyribose and adenine. The chain is 5'-methylthioadenosine/S-adenosylhomocysteine nucleosidase from Shewanella frigidimarina (strain NCIMB 400).